The primary structure comprises 273 residues: MSQSTVDVPPKGGFSFDLCKRNDMLTQKGLKAPSFLKTGTTIVGLIFKDGVILGADTRATEGPIVADKNCEKIHYMAPNIYCCGAGTAADTEAVTDMVSSQLRLHRYQTGRDSRVITALTLLKKHLFSYQGHVSAALVLGGVDITGPHLHTIYPHGSTDTLPFATMGSGSLAAMSVFEAKYKEGLTRDEGIKLVAESICSGIFNDLGSGSNVDICVITKGNKEYLRNYMEPNPRTYVSSKGYSFTKKTEVLLTKITPLLERVEITEVGEAMEE.

A propeptide spans 1–37 (MSQSTVDVPPKGGFSFDLCKRNDMLTQKGLKAPSFLK) (removed in mature form). The active-site Nucleophile is the T40.

It belongs to the peptidase T1B family. As to quaternary structure, component of the 20S core complex of the 26S proteasome. The 26S proteasome is composed of a core protease (CP), known as the 20S proteasome, capped at one or both ends by the 19S regulatory particle (RP/PA700). The 20S proteasome core is composed of 28 subunits that are arranged in four stacked rings, resulting in a barrel-shaped structure. The two end rings are each formed by seven alpha subunits, and the two central rings are each formed by seven beta subunits. The catalytic chamber with the active sites is on the inside of the barrel.

Its subcellular location is the cytoplasm. It is found in the nucleus. It catalyses the reaction Cleavage of peptide bonds with very broad specificity.. Its function is as follows. The proteasome is a multicatalytic proteinase complex which is characterized by its ability to cleave peptides with Arg, Phe, Tyr, Leu, and Glu adjacent to the leaving group at neutral or slightly basic pH. The proteasome has an ATP-dependent proteolytic activity. In Arabidopsis thaliana (Mouse-ear cress), this protein is Proteasome subunit beta type-7-A (PBB1).